The chain runs to 216 residues: ATP-dependent Clp protease proteolytic subunit (216 aa).

The active-site Nucleophile is S120. H145 is a catalytic residue.

The protein belongs to the peptidase S14 family. As to quaternary structure, fourteen ClpP subunits assemble into 2 heptameric rings which stack back to back to give a disk-like structure with a central cavity, resembling the structure of eukaryotic proteasomes.

It is found in the cytoplasm. It catalyses the reaction Hydrolysis of proteins to small peptides in the presence of ATP and magnesium. alpha-casein is the usual test substrate. In the absence of ATP, only oligopeptides shorter than five residues are hydrolyzed (such as succinyl-Leu-Tyr-|-NHMec, and Leu-Tyr-Leu-|-Tyr-Trp, in which cleavage of the -Tyr-|-Leu- and -Tyr-|-Trp bonds also occurs).. In terms of biological role, cleaves peptides in various proteins in a process that requires ATP hydrolysis. Has a chymotrypsin-like activity. Plays a major role in the degradation of misfolded proteins. The sequence is that of ATP-dependent Clp protease proteolytic subunit from Cupriavidus metallidurans (strain ATCC 43123 / DSM 2839 / NBRC 102507 / CH34) (Ralstonia metallidurans).